The primary structure comprises 397 residues: MAKEKFDRSLPHVNVGTIGHVDHGKTTLTAALTRVCSEVFGSAVVEFDKIDSAPEEKARGITINTAHVEYNSNIRHYAHVDCPGHADYVKNMITGAAQMDGAILVCSAADGPMPQTREHILLSRQVGVPYIVVFLNKADLVDDAELLELVEMEVRDLLSTYDFPGDDTPIIIGSARMALEGKDDNEMGTTAVKKLVETLDAYIPEPVRAIDQPFLMPIEDVFSISGRGTVVTGRIERGIVRVQDPLEIVGLRDTTTTTCTGVEMFRKLLDEGRAGENCGVLLRGTKRDDVERGQVLVKPGSVKPHTKFTAEVYVLSKEEGGRHTPFFKGYRPQFYFRTTDVTGNCELPEGVEMVMPGDNIQMTVTLIKTIAMEDGLRFAIREGGRTVGAGVVAKIIE.

Positions 10 to 207 (LPHVNVGTIG…TLDAYIPEPV (198 aa)) constitute a tr-type G domain. The interval 19–26 (GHVDHGKT) is G1. 19–26 (GHVDHGKT) is a GTP binding site. Position 26 (threonine 26) interacts with Mg(2+). The G2 stretch occupies residues 60–64 (GITIN). The tract at residues 81-84 (DCPG) is G3. GTP-binding positions include 81–85 (DCPGH) and 136–139 (NKAD). The G4 stretch occupies residues 136-139 (NKAD). A G5 region spans residues 174–176 (SAR).

The protein belongs to the TRAFAC class translation factor GTPase superfamily. Classic translation factor GTPase family. EF-Tu/EF-1A subfamily. As to quaternary structure, monomer.

It localises to the cytoplasm. It carries out the reaction GTP + H2O = GDP + phosphate + H(+). Functionally, GTP hydrolase that promotes the GTP-dependent binding of aminoacyl-tRNA to the A-site of ribosomes during protein biosynthesis. The protein is Elongation factor Tu of Pseudomonas entomophila (strain L48).